Here is a 652-residue protein sequence, read N- to C-terminus: Pesticidal crystal protein Cry3Bb (652 aa).

A compositionally biased stretch (basic and acidic residues) spans 1–12 (MNPNNRSEHDTI). Disordered regions lie at residues 1 to 33 (MNPN…ADNP) and 433 to 465 (KNET…ETTD). Residues 14 to 33 (VTPNSELQTNHNQYPLADNP) are compositionally biased toward polar residues.

This sequence belongs to the delta endotoxin family. As to quaternary structure, monomer.

Its function is as follows. Promotes colloidosmotic lysis by binding to the midgut epithelial cells of Coleoptera. Has moderate level of toxicity to southern corn rootworm. This chain is Pesticidal crystal protein Cry3Bb (cry3Bb), found in Bacillus thuringiensis.